The primary structure comprises 74 residues: Protein kish-B (74 aa).

Residues 1–22 form the signal peptide; it reads MTNVYSLDGILVFGLLFVCTCA. Topologically, residues 23–52 are extracellular; it reads YFKKVPRLKTWLLSEKKGVWGVFYKAAVIG. The chain crosses the membrane as a helical span at residues 53–73; the sequence is TRLHAAVAIACIVMAFYVLFI. Position 74 (Lys-74) is a topological domain, cytoplasmic.

This sequence belongs to the KISH family.

It is found in the golgi apparatus membrane. Involved in the early part of the secretory pathway. The chain is Protein kish-B (TMEM167B) from Bos taurus (Bovine).